A 199-amino-acid polypeptide reads, in one-letter code: MLVLGLTGSIGMGKSTTAKLFAEAGVPVYDADATVHKIYENEAVPAIEAAFPGTTLGGKVDRALLSAKVVHDPAAMKRLEGIVHPMLRAHHQQFLDDAESSGAPVAVVDVPLLFETGGEKRVDAVVVVTTSPEVQRERILARDNMTPEKLDAILARQMPDAEKRKRADFVVDTSNGLDPVRLQIREILEAAAKMPRRRD.

The 197-residue stretch at 3-199 (VLGLTGSIGM…AAAKMPRRRD (197 aa)) folds into the DPCK domain. ATP is bound at residue 11 to 16 (GMGKST).

Belongs to the CoaE family.

The protein localises to the cytoplasm. The catalysed reaction is 3'-dephospho-CoA + ATP = ADP + CoA + H(+). It functions in the pathway cofactor biosynthesis; coenzyme A biosynthesis; CoA from (R)-pantothenate: step 5/5. Functionally, catalyzes the phosphorylation of the 3'-hydroxyl group of dephosphocoenzyme A to form coenzyme A. This chain is Dephospho-CoA kinase, found in Rhodopseudomonas palustris (strain ATCC BAA-98 / CGA009).